The sequence spans 87 residues: U3-theraphotoxin-Hhn1a 13 (87 aa).

Positions 1-24 (MVNMKASMFLTSAGLVPLFVVCYA) are cleaved as a signal peptide. A propeptide spanning residues 25–52 (SESEEKEFPKEMLSSIFAVDNDFKQEER) is cleaved from the precursor. Disulfide bonds link cysteine 54/cysteine 67, cysteine 61/cysteine 72, and cysteine 66/cysteine 79.

This sequence belongs to the neurotoxin 10 (Hwtx-1) family. 51 (Hntx-8) subfamily. Hntx-8 sub-subfamily. As to expression, expressed by the venom gland.

The protein resides in the secreted. Its function is as follows. Ion channel inhibitor. This chain is U3-theraphotoxin-Hhn1a 13, found in Cyriopagopus hainanus (Chinese bird spider).